A 111-amino-acid polypeptide reads, in one-letter code: MKFCPKCGSMMMPRKENGKTVYKCSKCGYIDTENQKEAKITTVIKHSAKEKTLVLESDMPKTGVQLTRGISCPSCGNDEAYFWILQTRSADEPATRFYKCTKCGKVWREYE.

Zn(2+) is bound by residues cysteine 4, cysteine 7, cysteine 24, cysteine 27, cysteine 72, cysteine 75, cysteine 100, and cysteine 103. A C4-type zinc finger spans residues 4–27; that stretch reads CPKCGSMMMPRKENGKTVYKCSKC. The TFIIS-type zinc-finger motif lies at 68–108; it reads RGISCPSCGNDEAYFWILQTRSADEPATRFYKCTKCGKVWR.

The protein belongs to the archaeal RpoM/eukaryotic RPA12/RPB9/RPC11 RNA polymerase family.

In terms of biological role, induces RNA cleavage activity in the RNA polymerase. In its presence, the cleavage activity of the RNA polymerase truncates the RNA back to position +15 in a stepwise manner by releasing mainly dinucleotides from the 3'-end of the nascent RNA. The truncated RNAs are able to continue elongation. Involved in transcriptional proofreading and fidelity. Misincorporation of nucleotides during elongation of transcription leads to arrested elongation complexes which are rescued by TFS-promoted removal of a dinucleotide from the 3'-end. TFS is able to induce a cleavage resynthesis cycle in stalled elongation complexes (resulting from the next missing nucleotide or a reduced incorporation rate of a wrong nucleotide) preventing misincorporation and enabling proofreading in a post-incorporation manner. Pausing of elongation complexes is the main determinant of TFS-induced RNA cleavage. The sequence is that of Transcription factor S from Sulfolobus acidocaldarius (strain ATCC 33909 / DSM 639 / JCM 8929 / NBRC 15157 / NCIMB 11770).